Reading from the N-terminus, the 267-residue chain is Ribosomal RNA small subunit methyltransferase NEP1 (267 aa).

The interval 1 to 46 (MSELKNGTTEPKKNETTQSDSKSKSTSTNKSSVPPASLVPVQPTAL) is disordered. Over residues 16-32 (TTQSDSKSKSTSTNKSS) the composition is skewed to low complexity. Residues L195, G222, 227–229 (GKD), and 242–247 (LSDYPL) each bind S-adenosyl-L-methionine.

This sequence belongs to the class IV-like SAM-binding methyltransferase superfamily. RNA methyltransferase NEP1 family. As to quaternary structure, homodimer.

Its subcellular location is the nucleus. The protein localises to the nucleolus. It carries out the reaction a pseudouridine in rRNA + S-adenosyl-L-methionine = an N(1)-methylpseudouridine in rRNA + S-adenosyl-L-homocysteine + H(+). In terms of biological role, S-adenosyl-L-methionine-dependent pseudouridine N(1)-methyltransferase that methylates the pseudouridine corresponding to position 1189 (Psi1189) in S.cerevisiae 18S rRNA. Involved the biosynthesis of the hypermodified N1-methyl-N3-(3-amino-3-carboxypropyl) pseudouridine (m1acp3-Psi) conserved in eukaryotic 18S rRNA. Also has an essential role in 40S ribosomal subunit biogenesis independent on its methyltransferase activity, facilitating the incorporation of ribosomal protein S19 during the formation of pre-ribosomes. This Candida albicans (Yeast) protein is Ribosomal RNA small subunit methyltransferase NEP1.